Reading from the N-terminus, the 833-residue chain is Lon protease (833 aa).

Positions 3 to 198 (YPFMATRGVI…LIFSFLVELK (196 aa)) constitute a Lon N-terminal domain. 390–397 (GPPGTGKT) serves as a coordination point for ATP. The region spanning 627 to 808 (YERIGAVNGL…DEIFENLFGK (182 aa)) is the Lon proteolytic domain. Active-site residues include S714 and K757.

The protein belongs to the peptidase S16 family. As to quaternary structure, homohexamer. Organized in a ring with a central cavity.

The protein resides in the cytoplasm. It carries out the reaction Hydrolysis of proteins in presence of ATP.. Its function is as follows. ATP-dependent serine protease that mediates the selective degradation of mutant and abnormal proteins as well as certain short-lived regulatory proteins. Required for cellular homeostasis and for survival from DNA damage and developmental changes induced by stress. Degrades polypeptides processively to yield small peptide fragments that are 5 to 10 amino acids long. Binds to DNA in a double-stranded, site-specific manner. The protein is Lon protease of Mycoplasma mobile (strain ATCC 43663 / 163K / NCTC 11711) (Mesomycoplasma mobile).